Consider the following 160-residue polypeptide: Cyclic pyranopterin monophosphate synthase (160 aa).

Substrate contacts are provided by residues 77 to 79 (MCH) and 114 to 115 (ME). The active site involves Asp129.

Belongs to the MoaC family. As to quaternary structure, homohexamer; trimer of dimers.

It carries out the reaction (8S)-3',8-cyclo-7,8-dihydroguanosine 5'-triphosphate = cyclic pyranopterin phosphate + diphosphate. It participates in cofactor biosynthesis; molybdopterin biosynthesis. Functionally, catalyzes the conversion of (8S)-3',8-cyclo-7,8-dihydroguanosine 5'-triphosphate to cyclic pyranopterin monophosphate (cPMP). This chain is Cyclic pyranopterin monophosphate synthase, found in Listeria monocytogenes serotype 4a (strain HCC23).